Consider the following 159-residue polypeptide: Protein-export protein SecB (159 aa).

It belongs to the SecB family. In terms of assembly, homotetramer, a dimer of dimers. One homotetramer interacts with 1 SecA dimer.

It is found in the cytoplasm. One of the proteins required for the normal export of preproteins out of the cell cytoplasm. It is a molecular chaperone that binds to a subset of precursor proteins, maintaining them in a translocation-competent state. It also specifically binds to its receptor SecA. The polypeptide is Protein-export protein SecB (Burkholderia mallei (strain NCTC 10229)).